The following is a 211-amino-acid chain: MTSQRTRERLIQRLCEEGISNQRVLDVIRKTPRHLFVDEALAHRAYEDTALPIGHNQTISQPYMVARMSELLLAAGPLDKVMEIGTGSGYQTAVLAQLVERVFSVERIKGLQDRAKERLVELNLRNVVFRWGDGWEGWPALAPYNGIIVTAVATDVPQALLDQLAPGGRLVIPVGSGEVQQLMLIIREENGFSRHVLGAVRFVPLLNGPIA.

Serine 60 is an active-site residue.

It belongs to the methyltransferase superfamily. L-isoaspartyl/D-aspartyl protein methyltransferase family.

It localises to the cytoplasm. It catalyses the reaction [protein]-L-isoaspartate + S-adenosyl-L-methionine = [protein]-L-isoaspartate alpha-methyl ester + S-adenosyl-L-homocysteine. In terms of biological role, catalyzes the methyl esterification of L-isoaspartyl residues in peptides and proteins that result from spontaneous decomposition of normal L-aspartyl and L-asparaginyl residues. It plays a role in the repair and/or degradation of damaged proteins. This is Protein-L-isoaspartate O-methyltransferase from Pseudomonas syringae pv. syringae (strain B728a).